A 126-amino-acid chain; its full sequence is DNA-directed RNA polymerase subunit omega (126 aa).

This sequence belongs to the RNA polymerase subunit omega family. In terms of assembly, the RNAP catalytic core consists of 2 alpha, 1 beta, 1 beta' and 1 omega subunit. When a sigma factor is associated with the core the holoenzyme is formed, which can initiate transcription.

It catalyses the reaction RNA(n) + a ribonucleoside 5'-triphosphate = RNA(n+1) + diphosphate. Promotes RNA polymerase assembly. Latches the N- and C-terminal regions of the beta' subunit thereby facilitating its interaction with the beta and alpha subunits. The polypeptide is DNA-directed RNA polymerase subunit omega (Paramagnetospirillum magneticum (strain ATCC 700264 / AMB-1) (Magnetospirillum magneticum)).